A 382-amino-acid chain; its full sequence is Anthranilate O-methyltransferase 1 (382 aa).

S-adenosyl-L-homocysteine is bound at residue Tyr-20. Gln-27 lines the anthranilate pocket. Residues Cys-61, Asn-66, Asp-102, Leu-103, Ser-146, and Tyr-147 each contribute to the S-adenosyl-L-homocysteine site. Residue Trp-168 coordinates anthranilate. Residues Glu-268 and Phe-270 each contribute to the Mg(2+) site.

The protein belongs to the methyltransferase superfamily. Type-7 methyltransferase family. SABATH subfamily.

It carries out the reaction anthranilate + S-adenosyl-L-methionine = O-methyl anthranilate + S-adenosyl-L-homocysteine. Methyltransferase involved in the biosynthesis of methyl anthranilate in response to stresses. Utilizes anthranilic acid as substrate, but not salicylic acid. Produces exclusively the O-methyl ester. The sequence is that of Anthranilate O-methyltransferase 1 (AAMT1) from Zea mays (Maize).